The following is a 615-amino-acid chain: Dihydroxy-acid dehydratase (615 aa).

Asp-81 is a Mg(2+) binding site. Cys-122 is a binding site for [2Fe-2S] cluster. Residues Asp-123 and Lys-124 each coordinate Mg(2+). Lys-124 bears the N6-carboxylysine mark. Residue Cys-195 coordinates [2Fe-2S] cluster. Residue Glu-491 participates in Mg(2+) binding. The active-site Proton acceptor is Ser-517.

Belongs to the IlvD/Edd family. In terms of assembly, homodimer. Requires [2Fe-2S] cluster as cofactor. It depends on Mg(2+) as a cofactor.

It catalyses the reaction (2R)-2,3-dihydroxy-3-methylbutanoate = 3-methyl-2-oxobutanoate + H2O. The catalysed reaction is (2R,3R)-2,3-dihydroxy-3-methylpentanoate = (S)-3-methyl-2-oxopentanoate + H2O. It participates in amino-acid biosynthesis; L-isoleucine biosynthesis; L-isoleucine from 2-oxobutanoate: step 3/4. Its pathway is amino-acid biosynthesis; L-valine biosynthesis; L-valine from pyruvate: step 3/4. Functions in the biosynthesis of branched-chain amino acids. Catalyzes the dehydration of (2R,3R)-2,3-dihydroxy-3-methylpentanoate (2,3-dihydroxy-3-methylvalerate) into 2-oxo-3-methylpentanoate (2-oxo-3-methylvalerate) and of (2R)-2,3-dihydroxy-3-methylbutanoate (2,3-dihydroxyisovalerate) into 2-oxo-3-methylbutanoate (2-oxoisovalerate), the penultimate precursor to L-isoleucine and L-valine, respectively. This Novosphingobium aromaticivorans (strain ATCC 700278 / DSM 12444 / CCUG 56034 / CIP 105152 / NBRC 16084 / F199) protein is Dihydroxy-acid dehydratase.